Consider the following 966-residue polypeptide: Polycystin-2 (966 aa).

The disordered stretch occupies residues 1 to 106 (MVNSRRVQPQ…DDDEVEGEEG (106 aa)). Residues 1 to 217 (MVNSRRVQPQ…NANREKYLKS (217 aa)) lie on the Cytoplasmic side of the membrane. A compositionally biased stretch (gly residues) spans 30-44 (VAGGAGLAVPGGLGE). Basic and acidic residues predominate over residues 46-56 (RGLEIEMERIR). Low complexity predominate over residues 58–79 (AAARDPPAGASASPSPPLSSCS). Residues Ser72 and Ser76 each carry the phosphoserine modification. Acidic residues predominate over residues 91–105 (EAEEDDDDDEVEGEE). An Omega-N-methylarginine modification is found at Arg135. The tract at residues 147-179 (HLSGRRRRLEDQGAQCPSPAGGGDPLHRHLPLE) is disordered. Residues 218–239 (VLRELVTYLFFLVVLCILTYGM) form a helical membrane-spanning segment. Over 240-466 (MSSNVYYYTR…PVKLIRYVTA (227 aa)) the chain is Extracellular. 3 N-linked (GlcNAc...) asparagine glycosylation sites follow: Asn297, Asn303, and Asn326. Cysteines 329 and 342 form a disulfide. Residues Asn360 and Asn373 are each glycosylated (N-linked (GlcNAc...) asparagine). Residues 467–487 (FDFFLAACEIIFCFFIIYYVV) form a helical membrane-spanning segment. Residues 488–503 (EEILEIRIHRLSYFRS) are Cytoplasmic-facing. A helical membrane pass occupies residues 504–524 (FWNCLDVVIVVLSVVAMVINI). The Extracellular segment spans residues 525–550 (YRMSNAEGLLQFLEDQNSFPNFEHVA). The helical transmembrane segment at 551–571 (YWQIQFNNISAVMVFLVWIKL) threads the bilayer. Gln555 contributes to the cholesterol binding site. The Cytoplasmic portion of the chain corresponds to 572 to 595 (FKFINFNRTMSQLSTTMSRCAKDL). A helical transmembrane segment spans residues 596–617 (FGFTIMFSIIFLAYAQLAYLVF). Residues 618–629 (GTQVDDFSTFQE) lie on the Extracellular side of the membrane. The segment at residues 630–644 (CIFTQFRIILGDINF) is an intramembrane region (pore-forming). Position 639 (Leu639) interacts with Ca(2+). A Selectivity filter motif is present at residues 639 to 641 (LGD). The Extracellular segment spans residues 645–652 (AEIEEANR). A helical membrane pass occupies residues 653 to 673 (VLGPLYFTTFVFFMFFILLNM). The Cytoplasmic segment spans residues 674–966 (FLAIINDSYS…GGNGSANVHA (293 aa)). The 36-residue stretch at 748 to 783 (HTDAEIEAIFTKYDQDGDQELTEREHQQMRDDLEKE) folds into the EF-hand domain. 5 residues coordinate Ca(2+): Asp761, Asp763, Asp765, Glu767, and Glu772. The tract at residues 764 to 828 (GDQELTEREH…GHSSRRRGSI (65 aa)) is disordered. Residues 768–793 (LTEREHQQMRDDLEKEREDLDLEHSS) are compositionally biased toward basic and acidic residues. Positions 794–805 (LPRPMSSRSFPR) are enriched in low complexity. Phosphoserine occurs at positions 799, 806, 810, and 827. The segment at 801–820 (RSFPRSLDDSEEEDDEDSGH) is linker. Residues 808–819 (DDSEEEDDEDSG) are important for interaction with PACS1 and PACS2. Residues 831 to 870 (GVSYEEFQVLVRRVDRMEHSIGSIVSKIDAVIVKLEIMER) are a coiled coil. The disordered stretch occupies residues 914 to 966 (WESDDAASQTGHGVSTQVGLGGQPHPRNPRPPSSQSAEGLEGGGGNGSANVHA). Over residues 919–931 (AASQTGHGVSTQV) the composition is skewed to polar residues.

This sequence belongs to the polycystin family. Homotetramer. Component of the heterotetrameric polycystin channel complex with PKD1; the tetramer contains one PKD1 chain and three PKD2 chains. Interaction with PKD1 is required for ciliary localization. Isoform 1 interacts with PKD1 while isoform 3 does not. Interacts with PKD1L1. Interacts with CD2AP. Interacts with HAX1. Interacts with NEK8. Part of a complex containing AKAP5, ADCY5, ADCY6 and PDE4C. Interacts (via C-terminus) with TRPV4 (via C-terminus). Interacts (via C-terminal acidic region) with PACS1 and PACS2; these interactions retain the protein in the endoplasmic reticulum and prevent trafficking to the cell membrane. Interacts with TMEM33; enhancing its opening at the ER membrane. Interacts with TMEM120A; TMEM120A inhibits PKD2 channel activity through the physical association of PKD2 with TMEM120A. Interacts (via N-terminus) with RYR2; regulates RYR2 channel activity. Post-translationally, N-glycosylated. The four subunits in a tetramer probably differ in the extent of glycosylation; simultaneous glycosylation of all experimentally validated sites would probably create steric hindrance. Sumoylated by SUMO1; sumoylation regulates PKD2 membrane recycling and is necessary for intravascular pressure-induced arterial contractility. In terms of processing, phosphorylated. Phosphorylation is important for protein function; a mutant that lacks the N-terminal phosphorylation sites cannot complement a zebrafish pkd2-deficient mutant. PKD-mediated phosphorylation at the C-terminus regulates its function in the release of Ca(2+) stores from the endoplasmic reticulum. Phosphorylation at Ser-810 regulates PKD2 trafficking. Phosphorylation at Ser-72 is required for PKD2 trafficking to or retention at the lateral plasma membrane. Phosphorylation at Ser-799, Ser-810 and Ser-827 regulates PKD2 channel activity. In terms of tissue distribution, detected in kidney epithelium (at protein level). Highly expressed on basolateral membranes in distal convoluted tubules and medullary thick ascending limbs of Henle. Detected at much lower levels in cortical and medullary collecting tubules, and not detected in the glomerular tuft, in thin limbs of Henle, interstitium and blood vessels (at protein level). Expressed in mesenchymally derived structures in the developing embryo at day 12.5. Isoform 1 is predominantly expressed in kidney at all developmental stages with high levels also detected in lung. Isoform 3 shows highest expression in brain with lower expression in kidney and lung, low levels in thymus and is hardly detectable in liver.

The protein resides in the cell projection. It localises to the cilium membrane. The protein localises to the cell membrane. Its subcellular location is the basolateral cell membrane. It is found in the cytoplasmic vesicle membrane. The protein resides in the endoplasmic reticulum membrane. It localises to the golgi apparatus. The protein localises to the vesicle. Its subcellular location is the secreted. It is found in the extracellular exosome. It catalyses the reaction K(+)(in) = K(+)(out). The enzyme catalyses Na(+)(in) = Na(+)(out). The catalysed reaction is Ca(2+)(in) = Ca(2+)(out). Its activity is regulated as follows. Channel activity is regulated by phosphorylation. The channel is activated by increased cytoplasmic Ca(2+) (in the uM range) and by membrane depolarization. TMEM120A inhibits the channel activity of PKD2, and mediates mechanosensitivity of the PKD2-TMEM120A channel complex. At the endoplasmic reticulum membrane (ER), TMEM33 enhances its channel activity. PKD1/ PKD2 complex on the plasma membrane is activated by PKD1 N-terminus. Functionally, forms a nonselective cation channel. Can function as a homotetrameric ion channel or can form heteromer with PKD1. Displays distinct function depending on its subcellular localization and regulation by its binding partners. Functions as a cation channel, with a preference for monovalent cations over divalent cations that allows K(+), Na(+) and Ca(2+) influx, with low selectivity for Ca(2+). Involved in fluid-flow mechanosensation by the primary cilium in renal epithelium. In the endoplasmic reticulum, likely functions as a K(+) channel to facilitate Ca(2+) release. The heterotetrameric PKD1/PKD2 channel has higher Ca(2+) permeability than homomeric PKD2 channel and acts as a primarily Ca(2+)-permeable channel. PKD1 and PKD2 may function through a common signaling pathway that is necessary to maintain the normal, differentiated state of renal tubule cells. Interacts with and acts as a regulator of a number of other channels, such as TRPV4, TRPC1, IP3R, RYR2, ultimately further affecting intracellular signaling, to modulate intracellular Ca(2+) signaling. Together with TRPV4, forms mechano- and thermosensitive channels in cilium. In cardiomyocytes, PKD2 modulates Ca(2+) release from stimulated RYR2 receptors through direct association. Also involved in left-right axis specification via its role in sensing nodal flow; forms a complex with PKD1L1 in cilia to facilitate flow detection in left-right patterning. Acts as a regulator of cilium length together with PKD1. Mediates systemic blood pressure and contributes to the myogenic response in cerebral arteries though vasoconstriction. This Mus musculus (Mouse) protein is Polycystin-2.